The chain runs to 53 residues: ATP synthase protein 8 (53 aa).

A helical transmembrane segment spans residues 9 to 29 (WITSMLMFWISVSILFSTLWW).

Belongs to the ATPase protein 8 family. In terms of assembly, F-type ATPases have 2 components, CF(1) - the catalytic core - and CF(0) - the membrane proton channel.

It is found in the mitochondrion membrane. Functionally, mitochondrial membrane ATP synthase (F(1)F(0) ATP synthase or Complex V) produces ATP from ADP in the presence of a proton gradient across the membrane which is generated by electron transport complexes of the respiratory chain. F-type ATPases consist of two structural domains, F(1) - containing the extramembraneous catalytic core and F(0) - containing the membrane proton channel, linked together by a central stalk and a peripheral stalk. During catalysis, ATP synthesis in the catalytic domain of F(1) is coupled via a rotary mechanism of the central stalk subunits to proton translocation. Part of the complex F(0) domain. Minor subunit located with subunit a in the membrane. The sequence is that of ATP synthase protein 8 (MT-ATP8) from Lumbricus terrestris (Common earthworm).